Here is a 32-residue protein sequence, read N- to C-terminus: Cytochrome b6-f complex subunit 7 (32 aa).

The chain crosses the membrane as a helical span at residues 9–27 (AAVFWILIPIGLVGGALLL).

The protein belongs to the PetM family. In terms of assembly, the 4 large subunits of the cytochrome b6-f complex are cytochrome b6, subunit IV (17 kDa polypeptide, PetD), cytochrome f and the Rieske protein, while the 4 small subunits are PetG, PetL, PetM and PetN. The complex functions as a dimer.

Its subcellular location is the cellular thylakoid membrane. Functionally, component of the cytochrome b6-f complex, which mediates electron transfer between photosystem II (PSII) and photosystem I (PSI), cyclic electron flow around PSI, and state transitions. In Prochlorococcus marinus (strain MIT 9301), this protein is Cytochrome b6-f complex subunit 7.